A 217-amino-acid chain; its full sequence is MVQDLEQKLWSIASGIPFSSDYFLQASPIRKLKKENLFSKVFETYFLELGSGWGEVAISMALQRPNTGFILMEKKFDRIRHTIREIEKHSLDNVKILCVNFNWFLEEVFEENLFSEILLNFPDPWPKKRHHKKRTVNSKFLESLKILLPEKGKFYFATDYGPYARKIIRLFRDSKAFSPEKVELKSERNEIPVSHFERKKREEGKRIYYIDRVLVQK.

Residues Glu-48, Glu-73, Asn-100, and Asp-123 each coordinate S-adenosyl-L-methionine. Residue Asp-123 is part of the active site. Residues Lys-127 and Asp-159 each contribute to the substrate site.

This sequence belongs to the class I-like SAM-binding methyltransferase superfamily. TrmB family.

The enzyme catalyses guanosine(46) in tRNA + S-adenosyl-L-methionine = N(7)-methylguanosine(46) in tRNA + S-adenosyl-L-homocysteine. The protein operates within tRNA modification; N(7)-methylguanine-tRNA biosynthesis. Functionally, catalyzes the formation of N(7)-methylguanine at position 46 (m7G46) in tRNA. The polypeptide is tRNA (guanine-N(7)-)-methyltransferase (Leptospira interrogans serogroup Icterohaemorrhagiae serovar copenhageni (strain Fiocruz L1-130)).